The chain runs to 252 residues: Tricin synthase 1 (252 aa).

S-adenosyl-L-methionine is bound by residues S65, E87, 89–90 (GV), S95, and D113. An a divalent metal cation-binding site is contributed by D168. D170 is a binding site for S-adenosyl-L-methionine. Residues D194 and N195 each coordinate a divalent metal cation.

Belongs to the class I-like SAM-binding methyltransferase superfamily. Cation-dependent O-methyltransferase family. CCoAMT subfamily. The cofactor is Mg(2+). Mn(2+) serves as cofactor. Requires Co(2+) as cofactor. Ubiquitous. Highest expression in stems and roots.

The protein localises to the nucleus. The enzyme catalyses tricetin + 2 S-adenosyl-L-methionine = 3',5'-di-O-methyltricetin + 2 S-adenosyl-L-homocysteine + 2 H(+). Functionally, catalyzes the stepwise methylation of tricetin to its 3'-mono- and 3',5'-dimethyl ethers. No 3',4',5'-trimethylated ester derivatives are produced. Can use caffeoyl-CoA, 5-hydroxyferulic acid, luteolin, tricetin, quercetin, myrcetin and 7,8-dihydroxyflavone as substrates, but not naringenin, apigenin or kaempferol. The 2,3-double bond and the O-dihydroxyl group of the substrate are both required for catalytic activity of the enzyme. In Oryza sativa subsp. japonica (Rice), this protein is Tricin synthase 1 (ROMT-15).